Consider the following 116-residue polypeptide: MKFTKTEARKRRHFRVRHKVVGTAERPRLNVFKSNTNFYAQIIDDTKGVTLVSASTLKMDLKSKSNIQAAEKVAEELTKKALAANINQVVFDRNGYLYHGKIKAFAQKARENGLKF.

Belongs to the universal ribosomal protein uL18 family. Part of the 50S ribosomal subunit; part of the 5S rRNA/L5/L18/L25 subcomplex. Contacts the 5S and 23S rRNAs.

This is one of the proteins that bind and probably mediate the attachment of the 5S RNA into the large ribosomal subunit, where it forms part of the central protuberance. The polypeptide is Large ribosomal subunit protein uL18 (Mycoplasma capricolum subsp. capricolum (strain California kid / ATCC 27343 / NCTC 10154)).